Reading from the N-terminus, the 132-residue chain is Transthyretin-like protein 16 (132 aa).

The signal sequence occupies residues 1 to 19 (MRSLVVCLLLAACALECTA). Asparagine 23 is a glycosylation site (N-linked (GlcNAc...) asparagine).

The protein belongs to the nematode transthyretin-like family.

The protein resides in the secreted. This is Transthyretin-like protein 16 (ttr-16) from Caenorhabditis elegans.